Here is a 178-residue protein sequence, read N- to C-terminus: Caveolin-1 (178 aa).

An N-acetylserine modification is found at serine 2. At serine 2 the chain carries Phosphoserine. The segment at 2–94 is required for homooligomerization; it reads SGGKYVDSEG…WKASFTTFTV (93 aa). At 2–104 the chain is on the cytoplasmic side; that stretch reads SGGKYVDSEG…TKYWFYRLLS (103 aa). Residue lysine 5 is modified to N6-acetyllysine; alternate. Lysine 5 participates in a covalent cross-link: Glycyl lysine isopeptide (Lys-Gly) (interchain with G-Cter in ubiquitin); alternate. Tyrosine 6 carries the post-translational modification Phosphotyrosine. Phosphoserine is present on serine 9. Tyrosine 14 is modified (phosphotyrosine; by ABL1). Phosphotyrosine is present on tyrosine 25. Glycyl lysine isopeptide (Lys-Gly) (interchain with G-Cter in ubiquitin) cross-links involve residues lysine 26, lysine 30, lysine 39, lysine 47, and lysine 57. The segment at 82-94 is interaction with CAVIN3; the sequence is DGIWKASFTTFTV. The segment at residues 105-125 is an intramembrane region (helical); that stretch reads GIFGIPMALIWGVYFAILSFL. At 126-178 the chain is on the cytoplasmic side; that stretch reads HIWAVVPCIKSFLIEIQCISRVYSIYVHTFCDPLFEAIGKIFSNIRISTQKEI. The interacts with SPRY1, SPRY2, SPRY3 and SPRY4 stretch occupies residues 131–142; it reads VPCIKSFLIEIQ. S-palmitoyl cysteine attachment occurs at residues cysteine 133, cysteine 143, and cysteine 156. An interacts with SPRY1, SPRY2, and SPRY4 region spans residues 149 to 160; sequence SIYVHTFCDPLF. Residues 167-178 form an interacts with SPRY1, SPRY2, SPRY3 and SPRY4 region; that stretch reads FSNIRISTQKEI.

The protein belongs to the caveolin family. Homooligomer. Interacts with GLIPR2. Interacts with NOSTRIN. Interacts with SNAP25 and STX1A. Interacts (via the N-terminus) with DPP4; the interaction is direct. Interacts with CTNNB1, CDH1 and JUP. Interacts with PACSIN2; this interaction induces membrane tubulation. Interacts with SLC7A9. Interacts with BMX and BTK. Interacts with TGFBR1. Interacts with CAVIN3 (via leucine-zipper domain) in a cholesterol-sensitive manner. Interacts with CAVIN1. Interacts with EHD2 in a cholesterol-dependent manner. Forms a ternary complex with UBXN6 and VCP; mediates CAV1 targeting to lysosomes for degradation. Interacts with ABCG1; this interaction regulates ABCG1-mediated cholesterol efflux. Interacts with NEU3; this interaction enhances NEU3 sialidase activity within caveola. Interacts (via C-terminus) with SPRY1, SPRY2 (via C-terminus), SPRY3, and SPRY4. Interacts with IGFBP5; this interaction allows trafficking of IGFBP5 from the plasma membrane to the nucleus. Post-translationally, phosphorylated at Tyr-14 by ABL1 in response to oxidative stress. Ubiquitinated. Undergo monoubiquitination and multi- and/or polyubiquitination. Monoubiquitination of N-terminal lysines promotes integration in a ternary complex with UBXN6 and VCP which promotes oligomeric CAV1 targeting to lysosomes for degradation. Ubiquitinated by ZNRF1; leading to degradation and modulation of the TLR4-mediated immune response.

It localises to the golgi apparatus membrane. Its subcellular location is the cell membrane. It is found in the membrane. The protein resides in the caveola. The protein localises to the membrane raft. Its function is as follows. May act as a scaffolding protein within caveolar membranes. Forms a stable heterooligomeric complex with CAV2 that targets to lipid rafts and drives caveolae formation. Mediates the recruitment of CAVIN proteins (CAVIN1/2/3/4) to the caveolae. Interacts directly with G-protein alpha subunits and can functionally regulate their activity. Involved in the costimulatory signal essential for T-cell receptor (TCR)-mediated T-cell activation. Its binding to DPP4 induces T-cell proliferation and NF-kappa-B activation in a T-cell receptor/CD3-dependent manner. Recruits CTNNB1 to caveolar membranes and may regulate CTNNB1-mediated signaling through the Wnt pathway. Negatively regulates TGFB1-mediated activation of SMAD2/3 by mediating the internalization of TGFBR1 from membrane rafts leading to its subsequent degradation. Binds 20(S)-hydroxycholesterol (20(S)-OHC). This chain is Caveolin-1 (CAV1), found in Echinops telfairi (Lesser hedgehog tenrec).